The primary structure comprises 359 residues: 5-amino-6-(D-ribitylamino)uracil--L-tyrosine 4-hydroxyphenyl transferase 1 (359 aa).

The Radical SAM core domain maps to 45-282 (VTYVVNANIN…VYAISRIFFK (238 aa)). Residues C59, C63, and C66 each coordinate [4Fe-4S] cluster.

It belongs to the radical SAM superfamily. CofH family. In terms of assembly, consists of two subunits, CofG and CofH. [4Fe-4S] cluster serves as cofactor.

It catalyses the reaction 5-amino-6-(D-ribitylamino)uracil + L-tyrosine + S-adenosyl-L-methionine = 5-amino-5-(4-hydroxybenzyl)-6-(D-ribitylimino)-5,6-dihydrouracil + 2-iminoacetate + 5'-deoxyadenosine + L-methionine + H(+). Its pathway is cofactor biosynthesis; coenzyme F0 biosynthesis. In terms of biological role, catalyzes the radical-mediated synthesis of 5-amino-5-(4-hydroxybenzyl)-6-(D-ribitylimino)-5,6-dihydrouracil from 5-amino-6-(D-ribitylamino)uracil and L-tyrosine. This is 5-amino-6-(D-ribitylamino)uracil--L-tyrosine 4-hydroxyphenyl transferase 1 from Methanococcus maripaludis (strain DSM 14266 / JCM 13030 / NBRC 101832 / S2 / LL).